Reading from the N-terminus, the 356-residue chain is Zinc finger CCCH domain-containing protein 49 (356 aa).

2 consecutive C3H1-type zinc fingers follow at residues 120–146 (YSGT…HGVF) and 155–177 (YRTQ…AHSP). The interval 209–235 (ISPVSGSPPMSPRADSESSPMTQSLSR) is disordered. A compositionally biased stretch (polar residues) spans 225 to 235 (ESSPMTQSLSR).

The sequence is that of Zinc finger CCCH domain-containing protein 49 from Arabidopsis thaliana (Mouse-ear cress).